The primary structure comprises 465 residues: Serine/threonine-protein kinase 38 (465 aa).

A2 bears the N-acetylalanine mark. The interaction with S100B stretch occupies residues 62 to 87 (KRLRRSAHARKETEFLRLKRTRLGLE). T74 bears the Phosphothreonine mark. Residues 89 to 382 (FESLKVIGRG…VEEIKNNLFF (294 aa)) form the Protein kinase domain. ATP is bound by residues 95-103 (IGRGAFGEV) and K118. D212 serves as the catalytic Proton acceptor. The residue at position 264 (S264) is a Phosphoserine. S281 carries the post-translational modification Phosphoserine; by autocatalysis. A UFM1-interacting motif (UFIM) motif is present at residues 306–311 (WSLGVI). The region spanning 383–455 (EGVDWEHIRE…KRFEGLTARG (73 aa)) is the AGC-kinase C-terminal domain. The residue at position 444 (T444) is a Phosphothreonine; by STK24/MST3.

This sequence belongs to the protein kinase superfamily. AGC Ser/Thr protein kinase family. Homodimeric S100B binds two molecules of STK38. Interacts with MOB1 and MOB2. Interacts with MAP3K1 and MAP3K2 (via the kinase catalytic domain). Forms a tripartite complex with MOBKL1B and STK3/MST2. Interacts with MICAL1; leading to inhibit the protein kinase activity by antagonizing activation by MST1/STK4. Mg(2+) serves as cofactor. ISGylated. Post-translationally, phosphorylated by STK3/MST2 and this is enhanced by MOBKL1B. In terms of tissue distribution, expressed at high levels in spleen, lung, thymus, brain and fat tissue.

Its subcellular location is the nucleus. It localises to the cytoplasm. The protein localises to the chromosome. The enzyme catalyses L-seryl-[protein] + ATP = O-phospho-L-seryl-[protein] + ADP + H(+). It catalyses the reaction L-threonyl-[protein] + ATP = O-phospho-L-threonyl-[protein] + ADP + H(+). Its activity is regulated as follows. Activated by binding of S100B which releases autoinhibitory N-lobe interactions, enabling ATP to bind and the autophosphorylation of Ser-281. Thr-444 then undergoes calcium-dependent phosphorylation by STK24/MST3. Interactions between phosphorylated Thr-444 and the N-lobe promote additional structural changes that complete the activation of the kinase. Autoinhibition is also released by the binding of MOB1/MOBKL1A and MOB2/HCCA2 to the N-terminal of STK38. Its function is as follows. Serine/threonine-protein kinase that acts as a negative regulator of MAP3K1/2 signaling. Converts MAP3K2 from its phosphorylated form to its non-phosphorylated form and inhibits autophosphorylation of MAP3K2. Acts as an ufmylation 'reader' in a kinase-independent manner: specifically recognizes and binds mono-ufmylated histone H4 in response to DNA damage, promoting the recruitment of SUV39H1 to the double-strand breaks, resulting in ATM activation. The protein is Serine/threonine-protein kinase 38 of Mus musculus (Mouse).